Consider the following 333-residue polypeptide: Protein SEEDLING LETHAL 1, chloroplastic (333 aa).

A chloroplast-targeting transit peptide spans 1–55 (MQQEALSFLSSSLPSLHHNFPSLSRLRFNNFPALSFKPNTSSSSSSFFKSPDIPS). Positions 38–67 (PNTSSSSSSFFKSPDIPSLSSTTTTTTTTE) are disordered.

The protein belongs to the mTERF family. As to quaternary structure, self-interacts. Associates with the plastid-encoded RNA polymerase (PEP) complex. Interacts directly with PTAC7/PAP12, PTAC12/HMR/PAP5 and PTAC14/PAP7. As to expression, expressed in green aerial tissues such as cotyledons, leaves, flowers and siliques, but not in roots.

Its subcellular location is the plastid. The protein localises to the chloroplast stroma. It localises to the chloroplast nucleoid. Functionally, transcription termination factor required for chloroplast gene expression and protein synthesis in chloroplasts. Necessary for chloroplast photosynthetic complexes assembly by modulating the accumulation of photosynthetic proteins. Essential for embryogenesis. The polypeptide is Protein SEEDLING LETHAL 1, chloroplastic (Arabidopsis thaliana (Mouse-ear cress)).